The primary structure comprises 541 residues: Protein VAPYRIN (541 aa).

In terms of domain architecture, MSP spans 4 to 138 (LIKLDPSNIV…IDSAIKVMFV (135 aa)). 10 ANK repeats span residues 176–205 (QGQT…DIEA), 209–238 (VGST…NTEG), 242–271 (SVFR…RVDS), 275–304 (DGNT…RTDV), 309–338 (EGDT…TKYV), 342–372 (LGKT…CAAA), 374–392 (KGEV…VING), 396–425 (NGWT…DLDA), 429–458 (DGYT…DVEA), and 462–491 (KGVS…SREG).

As to quaternary structure, interacts with EX70I at the periarbuscular membrane (PAM) around the arbuscule hyphal tips. Expressed in roots.

It is found in the cytoplasm. The protein resides in the nucleus. Its subcellular location is the cell membrane. In terms of biological role, required for arbuscular mycorrhizal (AM) symbiosis with AM fungi (e.g. Glomus versiforme and Gigaspora gigantea) both during fungal passage across root epidermis and for arbuscule formation in cortical cells; this symbiosis promotes phosphorus (P) and copper (Cu) uptake. Essential for infection by symbiotic nitrogen-fixing rhizobial bacteria (e.g. Sinorhizobium meliloti) leading to the formation of root nodules. The protein is Protein VAPYRIN of Medicago truncatula (Barrel medic).